The chain runs to 427 residues: Glucose-6-phosphate isomerase (427 aa).

Catalysis depends on glutamate 277, which acts as the Proton donor. Residues histidine 298 and lysine 414 contribute to the active site.

It belongs to the GPI family.

The protein localises to the cytoplasm. It catalyses the reaction alpha-D-glucose 6-phosphate = beta-D-fructose 6-phosphate. It participates in carbohydrate biosynthesis; gluconeogenesis. The protein operates within carbohydrate degradation; glycolysis; D-glyceraldehyde 3-phosphate and glycerone phosphate from D-glucose: step 2/4. In terms of biological role, catalyzes the reversible isomerization of glucose-6-phosphate to fructose-6-phosphate. This Mycoplasma mycoides subsp. mycoides SC (strain CCUG 32753 / NCTC 10114 / PG1) protein is Glucose-6-phosphate isomerase.